A 104-amino-acid polypeptide reads, in one-letter code: DNA-directed RNA polymerase subunit omega (104 aa).

The protein belongs to the RNA polymerase subunit omega family. As to quaternary structure, the RNAP catalytic core consists of 2 alpha, 1 beta, 1 beta' and 1 omega subunit. When a sigma factor is associated with the core the holoenzyme is formed, which can initiate transcription.

It carries out the reaction RNA(n) + a ribonucleoside 5'-triphosphate = RNA(n+1) + diphosphate. Its function is as follows. Promotes RNA polymerase assembly. Latches the N- and C-terminal regions of the beta' subunit thereby facilitating its interaction with the beta and alpha subunits. This chain is DNA-directed RNA polymerase subunit omega, found in Streptococcus agalactiae serotype Ia (strain ATCC 27591 / A909 / CDC SS700).